A 362-amino-acid polypeptide reads, in one-letter code: 3-dehydroquinate synthase (362 aa).

NAD(+) contacts are provided by residues 73–78 (DAEAGK), 107–111 (GAATD), 131–132 (TT), lysine 144, lysine 153, and 171–174 (TLQT). Residues glutamate 186, histidine 249, and histidine 265 each contribute to the Zn(2+) site.

It belongs to the sugar phosphate cyclases superfamily. Dehydroquinate synthase family. The cofactor is NAD(+). It depends on Co(2+) as a cofactor. Zn(2+) serves as cofactor.

It is found in the cytoplasm. The enzyme catalyses 7-phospho-2-dehydro-3-deoxy-D-arabino-heptonate = 3-dehydroquinate + phosphate. It participates in metabolic intermediate biosynthesis; chorismate biosynthesis; chorismate from D-erythrose 4-phosphate and phosphoenolpyruvate: step 2/7. Catalyzes the conversion of 3-deoxy-D-arabino-heptulosonate 7-phosphate (DAHP) to dehydroquinate (DHQ). The sequence is that of 3-dehydroquinate synthase from Mycobacterium bovis (strain ATCC BAA-935 / AF2122/97).